The following is a 64-amino-acid chain: MATKTVRIEQIGSPIRREASQRATLVGLKLNKLHRVSELEDTPSVRGMIRKVAHLVRVLDDAAA.

The protein belongs to the universal ribosomal protein uL30 family. Part of the 50S ribosomal subunit.

In Methylorubrum extorquens (strain CM4 / NCIMB 13688) (Methylobacterium extorquens), this protein is Large ribosomal subunit protein uL30.